The following is a 151-amino-acid chain: UPF0102 protein Ava_4800 (151 aa).

It belongs to the UPF0102 family.

The protein is UPF0102 protein Ava_4800 of Trichormus variabilis (strain ATCC 29413 / PCC 7937) (Anabaena variabilis).